Here is a 655-residue protein sequence, read N- to C-terminus: p-hydroxybenzoic acid efflux pump subunit AaeB (655 aa).

Helical transmembrane passes span phenylalanine 13–leucine 33, tryptophan 38–proline 58, leucine 69–isoleucine 89, leucine 93–valine 113, tryptophan 121–leucine 141, glutamate 152–isoleucine 172, leucine 370–valine 390, phenylalanine 407–proline 427, glutamine 431–valine 451, methionine 459–phenylalanine 479, and phenylalanine 482–leucine 502.

This sequence belongs to the aromatic acid exporter ArAE (TC 2.A.85) family.

Its subcellular location is the cell inner membrane. Its function is as follows. Forms an efflux pump with AaeA. Could function as a metabolic relief valve, allowing to eliminate certain compounds when they accumulate to high levels in the cell. The sequence is that of p-hydroxybenzoic acid efflux pump subunit AaeB from Escherichia coli (strain SMS-3-5 / SECEC).